Consider the following 258-residue polypeptide: uncharacterized protein (258 aa).

The HTH deoR-type domain occupies 3 to 58 (VAERQQKIVEIVNMRSSIRVSELSDIFSVTEETIRRDLEKLEKEHKLSRSHGGAVS). The segment at residues 20 to 39 (IRVSELSDIFSVTEETIRRD) is a DNA-binding region (H-T-H motif).

This is an uncharacterized protein from Bacillus subtilis (strain 168).